We begin with the raw amino-acid sequence, 461 residues long: Fibrinogen C domain-containing protein 1 (461 aa).

The tract at residues 1–24 (MVNDRWKTMGGAAQLEDRPRDKPQ) is disordered. Topologically, residues 1 to 33 (MVNDRWKTMGGAAQLEDRPRDKPQRPSCGYVLC) are cytoplasmic. Over residues 15 to 24 (LEDRPRDKPQ) the composition is skewed to basic and acidic residues. Residues 34–54 (TVLLALAVLLAVAVTGAVLFL) form a helical; Signal-anchor for type II membrane protein membrane-spanning segment. At 55 to 461 (NHAHAPGTAP…MKIRPVREDR (407 aa)) the chain is on the extracellular side. The segment at 214–238 (GRPRNKADLQRAPARGTRPRGCATG) is disordered. In terms of domain architecture, Fibrinogen C-terminal spans 235–458 (CATGSRPRDC…FSEMKIRPVR (224 aa)). A disulfide bridge connects residues C244 and C273. Residue N340 is glycosylated (N-linked (GlcNAc...) asparagine). 2 residues coordinate Ca(2+): D393 and D395. C401 and C414 are disulfide-bonded.

In terms of assembly, homotetramer; disulfide-linked. Expressed in the small and large intestinal epithelial cells with a highly polarized localization to the apical surface corresponding to the brush border and in the ducts of the salivary gland.

It is found in the membrane. Acetyl group-binding receptor which shows a high-affinity and calcium-dependent binding to acetylated structures such as chitin, some N-acetylated carbohydrates, and amino acids, but not to their non-acetylated counterparts. Can facilitate the endocytosis of acetylated components. This chain is Fibrinogen C domain-containing protein 1 (FIBCD1), found in Homo sapiens (Human).